The primary structure comprises 612 residues: Dihydroxy-acid dehydratase (612 aa).

A Mg(2+)-binding site is contributed by D81. C122 serves as a coordination point for [2Fe-2S] cluster. D123 and K124 together coordinate Mg(2+). K124 bears the N6-carboxylysine mark. A [2Fe-2S] cluster-binding site is contributed by C193. Residue E489 coordinates Mg(2+). S515 functions as the Proton acceptor in the catalytic mechanism.

Belongs to the IlvD/Edd family. In terms of assembly, homodimer. The cofactor is [2Fe-2S] cluster. Requires Mg(2+) as cofactor.

It catalyses the reaction (2R)-2,3-dihydroxy-3-methylbutanoate = 3-methyl-2-oxobutanoate + H2O. The enzyme catalyses (2R,3R)-2,3-dihydroxy-3-methylpentanoate = (S)-3-methyl-2-oxopentanoate + H2O. Its pathway is amino-acid biosynthesis; L-isoleucine biosynthesis; L-isoleucine from 2-oxobutanoate: step 3/4. It functions in the pathway amino-acid biosynthesis; L-valine biosynthesis; L-valine from pyruvate: step 3/4. Functionally, functions in the biosynthesis of branched-chain amino acids. Catalyzes the dehydration of (2R,3R)-2,3-dihydroxy-3-methylpentanoate (2,3-dihydroxy-3-methylvalerate) into 2-oxo-3-methylpentanoate (2-oxo-3-methylvalerate) and of (2R)-2,3-dihydroxy-3-methylbutanoate (2,3-dihydroxyisovalerate) into 2-oxo-3-methylbutanoate (2-oxoisovalerate), the penultimate precursor to L-isoleucine and L-valine, respectively. The protein is Dihydroxy-acid dehydratase of Teredinibacter turnerae (strain ATCC 39867 / T7901).